A 591-amino-acid polypeptide reads, in one-letter code: Probable metalloprotease ARX1 (591 aa).

It belongs to the peptidase M24 family. In terms of assembly, component of the nucleoplasmic and cytoplasmic pre-60S ribosomal particles.

Its subcellular location is the cytoplasm. The protein resides in the nucleus. In terms of biological role, probable metalloprotease involved in proper assembly of pre-ribosomal particles during the biogenesis of the 60S ribosomal subunit. Accompanies the pre-60S particles to the cytoplasm. This is Probable metalloprotease ARX1 (ARX1) from Eremothecium gossypii (strain ATCC 10895 / CBS 109.51 / FGSC 9923 / NRRL Y-1056) (Yeast).